We begin with the raw amino-acid sequence, 381 residues long: Homoserine O-succinyltransferase (381 aa).

The region spanning 45 to 360 (NAVLVCHALN…PHGHDAFLLD (316 aa)) is the AB hydrolase-1 domain. Ser-151 acts as the Nucleophile in catalysis. Position 221 (Arg-221) interacts with substrate. Residues Asp-321 and His-354 contribute to the active site. Asp-355 is a binding site for substrate.

It belongs to the AB hydrolase superfamily. MetX family. Homodimer.

The protein resides in the cytoplasm. The catalysed reaction is L-homoserine + succinyl-CoA = O-succinyl-L-homoserine + CoA. It participates in amino-acid biosynthesis; L-methionine biosynthesis via de novo pathway; O-succinyl-L-homoserine from L-homoserine: step 1/1. Functionally, transfers a succinyl group from succinyl-CoA to L-homoserine, forming succinyl-L-homoserine. This chain is Homoserine O-succinyltransferase, found in Burkholderia ambifaria (strain MC40-6).